The chain runs to 472 residues: Clampless protein 1 (472 aa).

Asn-70 and Asn-296 each carry an N-linked (GlcNAc...) asparagine glycan.

In terms of biological role, required for developmental progression after cells of opposite mating types fuse with one another, essential for processes common to both dikaryotic filament formation and monokaryotic fruiting. A direct target for transcription factors Sxi1-alpha and Sxi2-a. The chain is Clampless protein 1 from Cryptococcus neoformans var. neoformans serotype D (strain B-3501A) (Filobasidiella neoformans).